A 536-amino-acid polypeptide reads, in one-letter code: Dual specificity calcium/calmodulin-dependent 3',5'-cyclic nucleotide phosphodiesterase 1B (536 aa).

A disordered region spans residues 1-20 (MELSPRSPPEMLEESDCPSP). S7 and S15 each carry phosphoserine. Calmodulin-binding stretches follow at residues 27-47 (PSKKMWIKLRSLLRYMVKQLE) and 118-141 (EKPKFRSIVHAVQAGIFVERMFRR). Residues 146–503 (VGPTYSTAVL…QKWKERAASG (358 aa)) form the PDEase domain. The active-site Proton donor is the H223. Residues H227, H263, D264, and D370 each coordinate Zn(2+). D264 contributes to the Mg(2+) binding site. Disordered stretches follow at residues 447–474 (LADEDSKSKNQPSFQWRQPSLDVEVGDP) and 494–536 (QKWK…GNLD). A compositionally biased stretch (polar residues) spans 455–464 (KNQPSFQWRQ). Residues S466 and S514 each carry the phosphoserine modification.

It belongs to the cyclic nucleotide phosphodiesterase family. PDE1 subfamily. As to quaternary structure, homodimer. Zn(2+) is required as a cofactor. The cofactor is Mg(2+).

Its subcellular location is the cytoplasm. It localises to the cytosol. The enzyme catalyses a nucleoside 3',5'-cyclic phosphate + H2O = a nucleoside 5'-phosphate + H(+). The catalysed reaction is 3',5'-cyclic GMP + H2O = GMP + H(+). It carries out the reaction 3',5'-cyclic AMP + H2O = AMP + H(+). Type I PDE are activated by the binding of calmodulin in the presence of Ca(2+). Functionally, cyclic nucleotide phosphodiesterase with a dual specificity for the second messengers cAMP and cGMP, which are key regulators of many important physiological processes. Has a preference for cGMP as a substrate. The chain is Dual specificity calcium/calmodulin-dependent 3',5'-cyclic nucleotide phosphodiesterase 1B from Homo sapiens (Human).